The primary structure comprises 969 residues: Protein translocase subunit SecA (969 aa).

ATP is bound by residues Q99, 117-121 (GEGKT), and D631.

This sequence belongs to the SecA family. Monomer and homodimer. Part of the essential Sec protein translocation apparatus which comprises SecA, SecYEG and auxiliary proteins SecDF. Other proteins may also be involved.

Its subcellular location is the cell inner membrane. It is found in the cytoplasm. The catalysed reaction is ATP + H2O + cellular proteinSide 1 = ADP + phosphate + cellular proteinSide 2.. Functionally, part of the Sec protein translocase complex. Interacts with the SecYEG preprotein conducting channel. Has a central role in coupling the hydrolysis of ATP to the transfer of proteins into and across the cell membrane, serving as an ATP-driven molecular motor driving the stepwise translocation of polypeptide chains across the membrane. This chain is Protein translocase subunit SecA, found in Chlamydia abortus (strain DSM 27085 / S26/3) (Chlamydophila abortus).